Consider the following 97-residue polypeptide: Putative defensin-like protein 227 (97 aa).

The signal sequence occupies residues 1-26 (MKWATLFMVSCVLMFFVMNNINEVES). 4 disulfide bridges follow: C35/C97, C45/C76, C53/C91, and C74/C93.

It belongs to the DEFL family.

It localises to the secreted. The sequence is that of Putative defensin-like protein 227 (SCRL28) from Arabidopsis thaliana (Mouse-ear cress).